Reading from the N-terminus, the 165-residue chain is Chaperone protein SicA (165 aa).

The protein belongs to the LcrH/SycD chaperone family. In terms of assembly, dimer or higher-order oligomers.

It is found in the cytoplasm. Its function is as follows. Type III secretion-associated chaperone required for SipB and SipC stabilization. Prevents premature association of SipB with SipC, which may lead to their targeting for degradation. Along with InvF, required for transcription activation of sigDE (sopB pipC), sicAsipBCDA, and sopE. This chain is Chaperone protein SicA (sicA), found in Salmonella dublin.